The chain runs to 217 residues: UPF0711 protein C18orf21 homolog (217 aa).

Serine 126 is modified (phosphoserine). Threonine 130 and threonine 139 each carry phosphothreonine. Positions 131–190 (AANKASPKTPKRTAPGSANLGQSTNGSKGKSPSLTIRTPTSGQSTPICSSRNGSKRKKHF) are disordered. Over residues 149–182 (NLGQSTNGSKGKSPSLTIRTPTSGQSTPICSSRN) the composition is skewed to polar residues.

This sequence belongs to the UPF0711 family.

The polypeptide is UPF0711 protein C18orf21 homolog (Mus musculus (Mouse)).